We begin with the raw amino-acid sequence, 61 residues long: Small ribosomal subunit protein uS14 (61 aa).

Zn(2+) contacts are provided by Cys-24, Cys-27, Cys-40, and Cys-43.

The protein belongs to the universal ribosomal protein uS14 family. Zinc-binding uS14 subfamily. As to quaternary structure, part of the 30S ribosomal subunit. Contacts proteins S3 and S10. It depends on Zn(2+) as a cofactor.

Its function is as follows. Binds 16S rRNA, required for the assembly of 30S particles and may also be responsible for determining the conformation of the 16S rRNA at the A site. The polypeptide is Small ribosomal subunit protein uS14 (Bifidobacterium longum (strain DJO10A)).